Reading from the N-terminus, the 250-residue chain is uncharacterized protein (250 aa).

6 consecutive 4Fe-4S ferredoxin-type domains span residues 38–67 (KLLY…KAKV), 69–98 (KSAK…VIEG), 124–153 (KKYE…AVRR), 154–183 (KSIE…VERE), 191–220 (RDIE…QDGD), and 220–249 (DKVK…MWEK). [4Fe-4S] cluster is bound by residues cysteine 47, cysteine 50, cysteine 53, cysteine 57, cysteine 78, cysteine 81, cysteine 84, cysteine 88, cysteine 133, cysteine 136, cysteine 139, cysteine 143, cysteine 163, cysteine 166, cysteine 169, cysteine 173, cysteine 200, cysteine 203, cysteine 206, cysteine 210, cysteine 229, cysteine 232, cysteine 235, and cysteine 239.

This is an uncharacterized protein from Methanocaldococcus jannaschii (strain ATCC 43067 / DSM 2661 / JAL-1 / JCM 10045 / NBRC 100440) (Methanococcus jannaschii).